The primary structure comprises 117 residues: Acylphosphatase (117 aa).

The Acylphosphatase-like domain occupies 31-117 (RWRWIIQGQV…RGDDWFEVRY (87 aa)). Catalysis depends on residues R46 and N64.

This sequence belongs to the acylphosphatase family.

The enzyme catalyses an acyl phosphate + H2O = a carboxylate + phosphate + H(+). This chain is Acylphosphatase (acyP), found in Synechococcus sp. (strain CC9902).